We begin with the raw amino-acid sequence, 352 residues long: Protein Wnt-3a (352 aa).

The signal sequence occupies residues 1 to 18; that stretch reads MAPLGYLLVLCSLKQALG. 11 cysteine pairs are disulfide-bonded: Cys77/Cys88, Cys128/Cys136, Cys138/Cys155, Cys203/Cys217, Cys205/Cys212, Cys281/Cys312, Cys297/Cys307, Cys311/Cys351, Cys327/Cys342, Cys329/Cys339, and Cys334/Cys335. Asn87 carries an N-linked (GlcNAc...) asparagine glycan. Ser209 carries the O-palmitoleoyl serine; by PORCN lipid modification. The N-linked (GlcNAc...) asparagine glycan is linked to Asn298.

This sequence belongs to the Wnt family. In terms of assembly, forms a soluble 1:1 complex with AFM; this prevents oligomerization and is required for prolonged biological activity. The complex with AFM may represent the physiological form in body fluids. Homooligomer; disulfide-linked, leading to inactivation. Interacts with APCDD1 and WLS. Component of the Wnt-Fzd-LRP5-LRP6 signaling complex that contains a WNT protein, a FZD protein and LRP5 or LRP6. Interacts directly in the complex with LRP6. Interacts with PORCN. Interacts with glypican GPC3. Interacts with PKD1 (via extracellular domain). Interacts with FZD5. Proteolytic processing by TIKI1 and TIKI2 promotes oxidation and formation of large disulfide-bond oligomers, leading to inactivation of WNT3A. In terms of processing, disulfide bonds have critical and distinct roles in secretion and activity. Loss of each conserved cysteine in WNT3A results in high molecular weight oxidized Wnt oligomers, which are formed through inter-Wnt disulfide bonding. Post-translationally, palmitoleoylation by PORCN is required for efficient binding to frizzled receptors. Palmitoleoylation is required for proper trafficking to cell surface, vacuolar acidification is critical to release palmitoleoylated WNT3A from WLS in secretory vesicles. Depalmitoleoylated by NOTUM, leading to inhibit Wnt signaling pathway, possibly by promoting disulfide bond formation and oligomerization. In terms of tissue distribution, dorsal portion of the neural tube (developing roof plate), and mesenchyme tissue surrounding the umbilical veins.

The protein resides in the secreted. It is found in the extracellular space. Its subcellular location is the extracellular matrix. In terms of biological role, ligand for members of the frizzled family of seven transmembrane receptors. Functions in the canonical Wnt signaling pathway that results in activation of transcription factors of the TCF/LEF family. Required for normal embryonic mesoderm development and formation of caudal somites. Required for normal morphogenesis of the developing neural tube. Mediates self-renewal of the stem cells at the bottom on intestinal crypts (in vitro). This chain is Protein Wnt-3a (Wnt3a), found in Mus musculus (Mouse).